Here is a 193-residue protein sequence, read N- to C-terminus: CASP-like protein 2D1 (193 aa).

The interval M1–A24 is disordered. Over M1–K29 the chain is Cytoplasmic. The chain crosses the membrane as a helical span at residues I30 to T50. Residues V51–Y73 lie on the Extracellular side of the membrane. The helical transmembrane segment at M74–V94 threads the bilayer. Residues T95 to Q109 are Cytoplasmic-facing. Residues V110 to G132 form a helical membrane-spanning segment. The Extracellular segment spans residues D133–K151. A helical transmembrane segment spans residues L152–I172. At S173 to A193 the chain is on the cytoplasmic side.

Belongs to the Casparian strip membrane proteins (CASP) family. In terms of assembly, homodimer and heterodimers.

It localises to the cell membrane. The protein is CASP-like protein 2D1 of Arabidopsis lyrata subsp. lyrata (Lyre-leaved rock-cress).